We begin with the raw amino-acid sequence, 569 residues long: S-(+)-linalool synthase, chloroplastic (569 aa).

The N-terminal 39 residues, 1–39, are a transit peptide targeting the chloroplast; sequence MALIATKISSRSCFVSAYPNNSPTFLISKFPNTVDSLSP. 5 residues coordinate (2E)-geranyl diphosphate: R294, D331, D335, R472, and D475. Residues D331 and D335 each contribute to the Mg(2+) site. Residues 331 to 335 carry the DDXXD motif motif; sequence DDIFD. Residues D475, S479, and E483 each contribute to the Mg(2+) site.

The protein belongs to the terpene synthase family. Tpsb subfamily. Mg(2+) is required as a cofactor. The cofactor is Mn(2+). Predominantly expressed in flowers but also in stems and siliques.

The protein resides in the plastid. It localises to the chloroplast. The enzyme catalyses (2E)-geranyl diphosphate + H2O = (S)-linalool + diphosphate. It participates in secondary metabolite biosynthesis; terpenoid biosynthesis. Involved in monoterpene (C10) biosynthesis. The major product is (S)-linalool. In Arabidopsis thaliana (Mouse-ear cress), this protein is S-(+)-linalool synthase, chloroplastic.